Reading from the N-terminus, the 219-residue chain is Thiopurine S-methyltransferase (219 aa).

W10, L45, E66, and R123 together coordinate S-adenosyl-L-methionine.

Belongs to the class I-like SAM-binding methyltransferase superfamily. TPMT family.

It is found in the cytoplasm. The enzyme catalyses S-adenosyl-L-methionine + a thiopurine = S-adenosyl-L-homocysteine + a thiopurine S-methylether.. The protein is Thiopurine S-methyltransferase of Bordetella bronchiseptica (strain ATCC BAA-588 / NCTC 13252 / RB50) (Alcaligenes bronchisepticus).